Consider the following 386-residue polypeptide: Paralemmin-1 (386 aa).

A coiled-coil region spans residues 4-115 (VEANTLQQER…TKENLAEAAA (112 aa)). 4 disordered regions span residues 21–40 (RKRQ…DRRQ), 51–149 (ERWL…PMKA), 240–290 (EATA…TMIF), and 321–378 (DAES…AKKQ). 2 stretches are compositionally biased toward basic and acidic residues: residues 24-40 (QTEI…DRRQ) and 68-95 (AMKK…RELE). The span at 97 to 116 (LENSSSVTSTKENLAEAAAP) shows a compositional bias: low complexity. Basic and acidic residues-rich tracts occupy residues 259 to 282 (PRRE…EPSR), 322 to 334 (AESK…KDHA), and 365 to 377 (EAKE…DAKK). S-palmitoyl cysteine attachment occurs at residues cysteine 380 and cysteine 382. Cysteine methyl ester is present on cysteine 383. Cysteine 383 carries S-farnesyl cysteine lipidation. Positions 384 to 386 (TVM) are cleaved as a propeptide — removed in mature form.

Belongs to the paralemmin family. As to quaternary structure, interacts with dopamine receptor DRD3. Phosphorylated. In terms of tissue distribution, expressed in the lens (at protein level). Highly expressed in forebrain and cerebellum with lower expression in adrenal gland and heart. Expression weak or undetectable in other tissues.

The protein localises to the cell membrane. The protein resides in the cell projection. It localises to the filopodium membrane. Its subcellular location is the axon. It is found in the dendrite. The protein localises to the dendritic spine. The protein resides in the basolateral cell membrane. It localises to the apicolateral cell membrane. Involved in plasma membrane dynamics and cell process formation. Isoform 1 and isoform 2 are necessary for axonal and dendritic filopodia induction, for dendritic spine maturation and synapse formation in a palmitoylation-dependent manner. The chain is Paralemmin-1 (PALM) from Gallus gallus (Chicken).